Reading from the N-terminus, the 148-residue chain is Large ribosomal subunit protein bL9 (148 aa).

It belongs to the bacterial ribosomal protein bL9 family.

Functionally, binds to the 23S rRNA. This Staphylococcus aureus (strain bovine RF122 / ET3-1) protein is Large ribosomal subunit protein bL9.